A 448-amino-acid chain; its full sequence is Tubulin beta chain (448 aa).

GTP is bound by residues Gln11, Glu69, Ser138, Gly142, Thr143, Gly144, Asn204, and Asn226. Glu69 serves as a coordination point for Mg(2+). Residues Tyr425 to Glu448 are disordered. Residues Glu432 to Glu448 show a composition bias toward acidic residues.

The protein belongs to the tubulin family. As to quaternary structure, dimer of alpha and beta chains. A typical microtubule is a hollow water-filled tube with an outer diameter of 25 nm and an inner diameter of 15 nM. Alpha-beta heterodimers associate head-to-tail to form protofilaments running lengthwise along the microtubule wall with the beta-tubulin subunit facing the microtubule plus end conferring a structural polarity. Microtubules usually have 13 protofilaments but different protofilament numbers can be found in some organisms and specialized cells. The cofactor is Mg(2+).

It localises to the cytoplasm. The protein resides in the cytoskeleton. Functionally, tubulin is the major constituent of microtubules, a cylinder consisting of laterally associated linear protofilaments composed of alpha- and beta-tubulin heterodimers. Microtubules grow by the addition of GTP-tubulin dimers to the microtubule end, where a stabilizing cap forms. Below the cap, tubulin dimers are in GDP-bound state, owing to GTPase activity of alpha-tubulin. The chain is Tubulin beta chain (benA56) from Aspergillus oryzae (strain ATCC 42149 / RIB 40) (Yellow koji mold).